The chain runs to 244 residues: Leucyl/phenylalanyl-tRNA--protein transferase (244 aa).

The disordered stretch occupies residues 1 to 22 (MHSQPYLLSPAPNNTPFPPAEH).

It belongs to the L/F-transferase family.

The protein localises to the cytoplasm. It catalyses the reaction N-terminal L-lysyl-[protein] + L-leucyl-tRNA(Leu) = N-terminal L-leucyl-L-lysyl-[protein] + tRNA(Leu) + H(+). The catalysed reaction is N-terminal L-arginyl-[protein] + L-leucyl-tRNA(Leu) = N-terminal L-leucyl-L-arginyl-[protein] + tRNA(Leu) + H(+). It carries out the reaction L-phenylalanyl-tRNA(Phe) + an N-terminal L-alpha-aminoacyl-[protein] = an N-terminal L-phenylalanyl-L-alpha-aminoacyl-[protein] + tRNA(Phe). Its function is as follows. Functions in the N-end rule pathway of protein degradation where it conjugates Leu, Phe and, less efficiently, Met from aminoacyl-tRNAs to the N-termini of proteins containing an N-terminal arginine or lysine. This chain is Leucyl/phenylalanyl-tRNA--protein transferase, found in Xylella fastidiosa (strain M12).